The sequence spans 267 residues: Glutamate racemase (267 aa).

Substrate contacts are provided by residues 9–10 (DS) and 41–42 (YG). Cysteine 72 (proton donor/acceptor) is an active-site residue. A substrate-binding site is contributed by 73–74 (NT). Cysteine 184 (proton donor/acceptor) is an active-site residue. 185–186 (TH) is a substrate binding site.

It belongs to the aspartate/glutamate racemases family.

The catalysed reaction is L-glutamate = D-glutamate. It functions in the pathway cell wall biogenesis; peptidoglycan biosynthesis. In terms of biological role, provides the (R)-glutamate required for cell wall biosynthesis. The polypeptide is Glutamate racemase (Staphylococcus epidermidis (strain ATCC 12228 / FDA PCI 1200)).